A 209-amino-acid chain; its full sequence is MNIYTSPTRTPNIAPKSGQRPSLPMLATDERSTDKESPNEDREFVPCSSLDVRRIYPKGPLLVLPEKIYLYSEPTVKELLPFDVVINVAEEANDLRMQVPAVEYHHYRWEHDSQIALDLPSLTSIIHAATTKREKILIHCQCGLSRSATLIIAYIMKYHNLSLRHSYDLLKSRADKINPSIGLIFQLMEWEVALNAKTNVQANSYRKVP.

Residues M1 to P11 show a composition bias toward polar residues. A disordered region spans residues M1 to E43. Residues T28–E43 show a composition bias toward basic and acidic residues. C47 and C142 are disulfide-bonded. The 138-residue stretch at G59 to A196 folds into the Tyrosine-protein phosphatase domain. 4-O-phospho-L-tyrosine is bound at residue H111. C140 functions as the Phosphocysteine intermediate in the catalytic mechanism.

This sequence belongs to the protein-tyrosine phosphatase family. Non-receptor class dual specificity subfamily.

The enzyme catalyses O-phospho-L-tyrosyl-[protein] + H2O = L-tyrosyl-[protein] + phosphate. In terms of biological role, mediates dephosphorylation of MAPK substrates such as SLT2, acquiring enhanced catalytic activity under oxidative conditions. This chain is Dual-specificity protein phosphatase SDP1 (SDP1), found in Saccharomyces cerevisiae (strain ATCC 204508 / S288c) (Baker's yeast).